We begin with the raw amino-acid sequence, 199 residues long: ParB-like protein Saci_1498 (199 aa).

The protein belongs to the ParB family.

Probably part of a 4-gene DNA damage response locus in which the upstream ups system, in combination with this downstream locus, functions in homologous recombination to rescue Sulfolobales from DNA-damaging threats. This protein might function in the DNA transfer machinery. This Sulfolobus acidocaldarius (strain ATCC 33909 / DSM 639 / JCM 8929 / NBRC 15157 / NCIMB 11770) protein is ParB-like protein Saci_1498.